The following is a 90-amino-acid chain: Probable Fe(2+)-trafficking protein (90 aa).

Belongs to the Fe(2+)-trafficking protein family.

Functionally, could be a mediator in iron transactions between iron acquisition and iron-requiring processes, such as synthesis and/or repair of Fe-S clusters in biosynthetic enzymes. This Marinobacter nauticus (strain ATCC 700491 / DSM 11845 / VT8) (Marinobacter aquaeolei) protein is Probable Fe(2+)-trafficking protein.